Here is a 55-residue protein sequence, read N- to C-terminus: Chromatin protein Cren7 (55 aa).

This sequence belongs to the Cren7 family. As to quaternary structure, monomer. Methylated at multiple sites, to varying extents.

It is found in the chromosome. It localises to the cytoplasm. In terms of biological role, a chromatin protein, binds double-stranded DNA without sequence specificity. Constrains negative DNA supercoils. The chain is Chromatin protein Cren7 from Ignicoccus hospitalis (strain KIN4/I / DSM 18386 / JCM 14125).